A 391-amino-acid chain; its full sequence is 3-ketoacyl-CoA thiolase (391 aa).

C95 (acyl-thioester intermediate) is an active-site residue. Residues H347 and C377 each act as proton acceptor in the active site.

Belongs to the thiolase-like superfamily. Thiolase family. As to quaternary structure, heterotetramer of two alpha chains (FadB) and two beta chains (FadA).

The protein resides in the cytoplasm. The catalysed reaction is an acyl-CoA + acetyl-CoA = a 3-oxoacyl-CoA + CoA. It functions in the pathway lipid metabolism; fatty acid beta-oxidation. Functionally, catalyzes the final step of fatty acid oxidation in which acetyl-CoA is released and the CoA ester of a fatty acid two carbons shorter is formed. In Pseudomonas syringae pv. syringae (strain B728a), this protein is 3-ketoacyl-CoA thiolase.